Reading from the N-terminus, the 224-residue chain is Ribonuclease T (224 aa).

Positions 20 to 194 (VVIDVETAGF…YDTERTAELF (175 aa)) constitute an Exonuclease domain. Residues Asp23, Glu25, His181, and Asp186 each contribute to the Mg(2+) site. His181 acts as the Proton donor/acceptor in catalysis.

This sequence belongs to the RNase T family. In terms of assembly, homodimer. Mg(2+) serves as cofactor.

In terms of biological role, trims short 3' overhangs of a variety of RNA species, leaving a one or two nucleotide 3' overhang. Responsible for the end-turnover of tRNA: specifically removes the terminal AMP residue from uncharged tRNA (tRNA-C-C-A). Also appears to be involved in tRNA biosynthesis. The sequence is that of Ribonuclease T from Shewanella putrefaciens (strain CN-32 / ATCC BAA-453).